Consider the following 909-residue polypeptide: MATIYVDGKEYEVDGADNLLQACLSLGLDVPYFCWHPALGSVGACRQCAVKQYQNADDKRGRLVMSCMTPSTDGTYISIEDEEAKEFRKCVVEWQMTNHPHDCPVCEEGGACHLQDMTVMTGHNSRRYRFTKRTHQNQDLGPFINHEMNRCIACYRCVRYYKDYAGGEDLGVYGAHDNVYFGRVEDGTLESEFSGNLVEVCPTGVFTDKTHSERYNRKWDMQFAPSICQQCSVGCNISPGERYGELRRIENRFHGSVNHYFLCDRGRFGYGYVNLPDRPRQPQLKNGNEQLAITVDGALNRAADALRNAKGVIGIGSPRASLESNFALRELVGANNFYVGVEQAEWQCQQQMLHILQHGGVPTPSLRDMEEADAILVLGEDVTMSAARIALSLRQAVKGKARELARKMKVDLWQVAAVQTLGQNQRYPLLITSLDTTRLDDVVEDKLHAPYADQARLGFAIANLLDPAAPAVTDLGAEQQAQAARWAELLGNAKKPLIIAGSSARSMALIEAASNIARALKGRGLEASIALVGQEANSLGLAMLASTSQPLEAALERIEAEEGLALVTVENDLYRRAARNRVDAALARLQHLLVIDHQATSTAQKADLVLPAASFAETDGTLVNMEGRAQRFFQVYAPAFYNADIQVREGWRWLAALQGTLEHKPLRWQTFDEISHACAASVPLLATMLEAAPNAGLRIRGMRLAREPHRYSGRTSMLANQNVSEPRVAQDPDSPFNFSMEGYAGSRQDMPQVPFAWAPGWNSPSAWNKFQDEVGGHLRAGDPGRRLLEATADTLDWFSAIPAPFKTADALQVVNYAQLFGGEELSARSPVIQARMSEPMLVLNPHDAARFALVEGGLVAFSWGGNHWRLPLRLSKKLSQGLVGLPLGVSGLPTALHQAYLANLQEAIA.

The 2Fe-2S ferredoxin-type domain maps to 1 to 83; it reads MATIYVDGKE…GTYISIEDEE (83 aa). [2Fe-2S] cluster is bound by residues Cys-34, Cys-45, Cys-48, and Cys-67. In terms of domain architecture, 4Fe-4S His(Cys)3-ligated-type spans 83-122; it reads EAKEFRKCVVEWQMTNHPHDCPVCEEGGACHLQDMTVMTG. 12 residues coordinate [4Fe-4S] cluster: His-99, Cys-103, Cys-106, Cys-112, Cys-151, Cys-154, Cys-157, Cys-201, Cys-228, Cys-231, Cys-235, and Cys-263. One can recognise a 4Fe-4S Mo/W bis-MGD-type domain in the interval 221–277; sequence MQFAPSICQQCSVGCNISPGERYGELRRIENRFHGSVNHYFLCDRGRFGYGYVNLPD.

This sequence belongs to the complex I 75 kDa subunit family. In terms of assembly, composed of 13 different subunits. Subunits NuoCD, E, F, and G constitute the peripheral sector of the complex. Requires [2Fe-2S] cluster as cofactor. [4Fe-4S] cluster serves as cofactor.

The enzyme catalyses a quinone + NADH + 5 H(+)(in) = a quinol + NAD(+) + 4 H(+)(out). In terms of biological role, NDH-1 shuttles electrons from NADH, via FMN and iron-sulfur (Fe-S) centers, to quinones in the respiratory chain. The immediate electron acceptor for the enzyme in this species is believed to be ubiquinone. Couples the redox reaction to proton translocation (for every two electrons transferred, four hydrogen ions are translocated across the cytoplasmic membrane), and thus conserves the redox energy in a proton gradient. This is NADH-quinone oxidoreductase subunit G (nuoG) from Shewanella oneidensis (strain ATCC 700550 / JCM 31522 / CIP 106686 / LMG 19005 / NCIMB 14063 / MR-1).